Consider the following 420-residue polypeptide: Protein disulfide isomerase Creld1 (420 aa).

The first 29 residues, 1 to 29 (MAPQPLRGLVPFLLWCLSLFLSLPGPVWL), serve as a signal peptide directing secretion. Residues 30–362 (QPSPPPHSAP…GFFAEMTEDE (333 aa)) are Extracellular-facing. The CXXC signature appears at 46–49 (CHTC). Cystine bridges form between Cys46/Cys49, Cys155/Cys169, Cys163/Cys181, and Cys183/Cys192. An EGF-like 1 domain is found at 153–193 (LPCPGGTERPCGGYGQCEGEGTRGGSGHCDCQAGYGGEACG). Asn205 is a glycosylation site (N-linked (GlcNAc...) asparagine). 2 FU repeats span residues 208–255 (HLVC…EQAT) and 268–315 (SYEC…VVCP). The short motif at 278-281 (CLGC) is the CXXC element. Intrachain disulfides connect Cys278–Cys281, Cys309–Cys321, Cys314–Cys330, and Cys332–Cys343. In terms of domain architecture, EGF-like 2; calcium-binding spans 305–342 (DVDECETVVCPGENEQCENTEGSYRCVCAEGFRQEDGI). A helical transmembrane segment spans residues 363-383 (MVVLQQMFFGVIICALATLAA). Lys384 is a topological domain (cytoplasmic). A helical membrane pass occupies residues 385 to 405 (GDLVFTAIFIGAVAAMTGYWL). Topologically, residues 406-420 (SERSDRVLEGFIKGR) are extracellular.

The protein belongs to the CRELD family.

Its subcellular location is the membrane. The enzyme catalyses Catalyzes the rearrangement of -S-S- bonds in proteins.. In terms of biological role, protein disulfide isomerase. Promotes the localization of acetylcholine receptors (AChRs) to the plasma membrane. The polypeptide is Protein disulfide isomerase Creld1 (Creld1) (Rattus norvegicus (Rat)).